The sequence spans 226 residues: Leucyl/phenylalanyl-tRNA--protein transferase (226 aa).

This sequence belongs to the L/F-transferase family.

The protein localises to the cytoplasm. The enzyme catalyses N-terminal L-lysyl-[protein] + L-leucyl-tRNA(Leu) = N-terminal L-leucyl-L-lysyl-[protein] + tRNA(Leu) + H(+). The catalysed reaction is N-terminal L-arginyl-[protein] + L-leucyl-tRNA(Leu) = N-terminal L-leucyl-L-arginyl-[protein] + tRNA(Leu) + H(+). It carries out the reaction L-phenylalanyl-tRNA(Phe) + an N-terminal L-alpha-aminoacyl-[protein] = an N-terminal L-phenylalanyl-L-alpha-aminoacyl-[protein] + tRNA(Phe). Functionally, functions in the N-end rule pathway of protein degradation where it conjugates Leu, Phe and, less efficiently, Met from aminoacyl-tRNAs to the N-termini of proteins containing an N-terminal arginine or lysine. This is Leucyl/phenylalanyl-tRNA--protein transferase from Bradyrhizobium sp. (strain ORS 278).